The following is a 123-amino-acid chain: Large ribosomal subunit protein uL14c (123 aa).

Belongs to the universal ribosomal protein uL14 family. As to quaternary structure, part of the 50S ribosomal subunit. Interacts with IOJAP.

It is found in the plastid. It localises to the chloroplast. Its function is as follows. Binds to 23S rRNA. This chain is Large ribosomal subunit protein uL14c, found in Zea mays (Maize).